Consider the following 142-residue polypeptide: Large ribosomal subunit protein uL23 (142 aa).

The protein belongs to the universal ribosomal protein uL23 family. Component of the large ribosomal subunit. Mature ribosomes consist of a small (40S) and a large (60S) subunit. The 40S subunit contains about 32 different proteins and 1 molecule of RNA (18S). The 60S subunit contains 45 different proteins and 3 molecules of RNA (25S, 5.8S and 5S).

The protein resides in the cytoplasm. Its function is as follows. Component of the ribosome, a large ribonucleoprotein complex responsible for the synthesis of proteins in the cell. The small ribosomal subunit (SSU) binds messenger RNAs (mRNAs) and translates the encoded message by selecting cognate aminoacyl-transfer RNA (tRNA) molecules. The large subunit (LSU) contains the ribosomal catalytic site termed the peptidyl transferase center (PTC), which catalyzes the formation of peptide bonds, thereby polymerizing the amino acids delivered by tRNAs into a polypeptide chain. The nascent polypeptides leave the ribosome through a tunnel in the LSU and interact with protein factors that function in enzymatic processing, targeting, and the membrane insertion of nascent chains at the exit of the ribosomal tunnel. RPL25 is a major component of the universal docking site for these factors at the polypeptide exit tunnel. This Candida albicans (strain SC5314 / ATCC MYA-2876) (Yeast) protein is Large ribosomal subunit protein uL23.